Here is an 83-residue protein sequence, read N- to C-terminus: Protein CASPARIAN STRIP INTEGRITY FACTOR 1 (83 aa).

Positions 1 to 22 are cleaved as a signal peptide; that stretch reads MGMSPLTVKKLGFIFMIVSASA. The disordered stretch occupies residues 59 to 83; sequence MNTKDYGNNSPSPRLERPPFKLIPN. Tyr64 carries the sulfotyrosine modification. 2 positions are modified to hydroxyproline: Pro69 and Pro71.

As to quaternary structure, interacts with the specific receptor kinases GSO1 and GSO2. Expressed exclusively in the root stele.

Functionally, peptide hormone required for contiguous Casparian strip diffusion barrier formation in roots via the regulation of CASPs protein expression and distribution in a GSO1-GSO2 signaling pathway. The Casparian strip is required for ion homeostasis (e.g. iron and potassium ions). This is Protein CASPARIAN STRIP INTEGRITY FACTOR 1 from Arabidopsis thaliana (Mouse-ear cress).